A 757-amino-acid chain; its full sequence is 5-methyltetrahydropteroyltriglutamate--homocysteine methyltransferase (757 aa).

5-methyltetrahydropteroyltri-L-glutamate is bound by residues 15-18 and lysine 114; that span reads RELK. Residues 428–430 and glutamate 481 contribute to the L-homocysteine site; that span reads IGS. Residues 428 to 430 and glutamate 481 each bind L-methionine; that span reads IGS. Residues 512–513 and tryptophan 558 each bind 5-methyltetrahydropteroyltri-L-glutamate; that span reads RC. L-homocysteine is bound at residue aspartate 596. Aspartate 596 provides a ligand contact to L-methionine. 5-methyltetrahydropteroyltri-L-glutamate is bound at residue glutamate 602. Zn(2+) contacts are provided by histidine 639, cysteine 641, and glutamate 663. The active-site Proton donor is the histidine 692. Cysteine 724 contacts Zn(2+).

This sequence belongs to the vitamin-B12 independent methionine synthase family. Requires Zn(2+) as cofactor.

It catalyses the reaction 5-methyltetrahydropteroyltri-L-glutamate + L-homocysteine = tetrahydropteroyltri-L-glutamate + L-methionine. The protein operates within amino-acid biosynthesis; L-methionine biosynthesis via de novo pathway; L-methionine from L-homocysteine (MetE route): step 1/1. Its function is as follows. Catalyzes the transfer of a methyl group from 5-methyltetrahydrofolate to homocysteine resulting in methionine formation. In Lactococcus lactis subsp. cremoris (strain SK11), this protein is 5-methyltetrahydropteroyltriglutamate--homocysteine methyltransferase.